The following is a 130-amino-acid chain: Small ribosomal subunit protein uS11 (130 aa).

This sequence belongs to the universal ribosomal protein uS11 family. In terms of assembly, part of the 30S ribosomal subunit. Interacts with proteins S7 and S18. Binds to IF-3.

Functionally, located on the platform of the 30S subunit, it bridges several disparate RNA helices of the 16S rRNA. Forms part of the Shine-Dalgarno cleft in the 70S ribosome. The chain is Small ribosomal subunit protein uS11 from Shewanella violacea (strain JCM 10179 / CIP 106290 / LMG 19151 / DSS12).